Consider the following 206-residue polypeptide: Cytochrome c biogenesis ATP-binding export protein CcmA (206 aa).

Residues 4-205 (LEGIDLTCIR…AGAAIQRLQL (202 aa)) form the ABC transporter domain. 36–43 (GPNGSGKT) is a binding site for ATP.

The protein belongs to the ABC transporter superfamily. CcmA exporter (TC 3.A.1.107) family. As to quaternary structure, the complex is composed of two ATP-binding proteins (CcmA) and two transmembrane proteins (CcmB).

The protein localises to the cell inner membrane. It carries out the reaction heme b(in) + ATP + H2O = heme b(out) + ADP + phosphate + H(+). Its function is as follows. Part of the ABC transporter complex CcmAB involved in the biogenesis of c-type cytochromes; once thought to export heme, this seems not to be the case, but its exact role is uncertain. Responsible for energy coupling to the transport system. In Nitrosospira multiformis (strain ATCC 25196 / NCIMB 11849 / C 71), this protein is Cytochrome c biogenesis ATP-binding export protein CcmA.